The sequence spans 154 residues: 6,7-dimethyl-8-ribityllumazine synthase (154 aa).

5-amino-6-(D-ribitylamino)uracil contacts are provided by residues F26, 60–62 (ALE), and 84–86 (CII). 89–90 (ET) provides a ligand contact to (2S)-2-hydroxy-3-oxobutyl phosphate. The Proton donor role is filled by H92. N117 contributes to the 5-amino-6-(D-ribitylamino)uracil binding site. R131 contacts (2S)-2-hydroxy-3-oxobutyl phosphate.

The protein belongs to the DMRL synthase family.

It carries out the reaction (2S)-2-hydroxy-3-oxobutyl phosphate + 5-amino-6-(D-ribitylamino)uracil = 6,7-dimethyl-8-(1-D-ribityl)lumazine + phosphate + 2 H2O + H(+). Its pathway is cofactor biosynthesis; riboflavin biosynthesis; riboflavin from 2-hydroxy-3-oxobutyl phosphate and 5-amino-6-(D-ribitylamino)uracil: step 1/2. In terms of biological role, catalyzes the formation of 6,7-dimethyl-8-ribityllumazine by condensation of 5-amino-6-(D-ribitylamino)uracil with 3,4-dihydroxy-2-butanone 4-phosphate. This is the penultimate step in the biosynthesis of riboflavin. This is 6,7-dimethyl-8-ribityllumazine synthase from Leptothrix cholodnii (strain ATCC 51168 / LMG 8142 / SP-6) (Leptothrix discophora (strain SP-6)).